A 1368-amino-acid polypeptide reads, in one-letter code: Inactive tyrosine-protein kinase PRAG1 (1368 aa).

The tract at residues 200–236 is disordered; sequence CLKGPRPCTSPQPLRESLPSEDDSDQRCSPSGDSEGG. Residue Tyr238 is modified to Phosphotyrosine; by CSK. The tract at residues 297–330 is disordered; sequence STANPPHLGPKKPSLNSEAASSSDGLSCGSSRSG. The span at 317 to 330 shows a compositional bias: low complexity; it reads SSSDGLSCGSSRSG. Tyr343 and Tyr391 each carry phosphotyrosine; by CSK. Disordered stretches follow at residues 392–443, 499–605, and 636–792; these read AESA…PNAA, LSSR…GAWS, and HSNS…KKIV. The segment covering 414–434 has biased composition (polar residues); that stretch reads VSSGQVWTGDTWSQKTPSGWS. Positions 502–518 are enriched in basic and acidic residues; it reads RESHPHNMTENSSKEKP. 2 stretches are compositionally biased toward low complexity: residues 522–535 and 550–563; these read PKLSKSSPGGSPVS and SGSSVGSQPSSRVP. Polar residues-rich tracts occupy residues 564–574 and 652–666; these read TNLTSSCQTNG and SGQNGKTNSGMSKSA. Phosphoserine occurs at positions 667 and 716. 2 stretches are compositionally biased toward polar residues: residues 707–717 and 725–741; these read VSQSSAESLSP and SFTTGSTDSLASDSRTC. Ser753 and Ser797 each carry phosphoserine. Disordered regions lie at residues 799 to 818 and 873 to 901; these read PDGFFWTQGSPKPRTASPKL and NSKGGCGSPNLQGRAATSTSSSQLSVSSQ. The span at 887-901 shows a compositional bias: low complexity; sequence AATSTSSSQLSVSSQ. The segment at 906 to 949 is required for homodimerization; the sequence is SSQLQLHSLLSSISSKEGTYAKLGGLYTQSLARLVTKCEDLFMG. The Protein kinase domain occupies 940 to 1291; sequence VTKCEDLFMG…EAKRVLQCLL (352 aa). The span at 1134–1144 shows a compositional bias: polar residues; sequence SSPGPSANPSV. The disordered stretch occupies residues 1134-1166; sequence SSPGPSANPSVPTTTSRCPSAAPAATTACQGGP. The segment covering 1145–1162 has biased composition (low complexity); that stretch reads PTTTSRCPSAAPAATTAC. The interval 1293-1368 is required for homodimerization; the sequence is GPRRELVEQP…LQSLKLLQLL (76 aa).

This sequence belongs to the protein kinase superfamily. Homodimer. Dimerization leads to the catalytic activation of CSK. Interacts (via C-terminus) with RND2. Interacts with CSK (via SH2 domain) in a Tyr-391 phosphorylation-dependent manner; this interaction potentiates kinase activity of CSK. Interacts with NOTCH1 intracellular domain (N1ICD). Forms a complex with N1ICD and MAML1, in a MAML1-dependent manner. Post-translationally, phosphorylated by CSK on Tyr-238, Tyr-343, and Tyr-391; Tyr-391 is a primary site of phosphorylation. As to expression, highly-expressed in brain, including cortical and hippocampal pyramidal neurons, as well as in kidney, spleen, colon and small intestine.

It is found in the cytoplasm. It localises to the nucleus. The protein resides in the cell junction. Its subcellular location is the focal adhesion. Functionally, catalytically inactive protein kinase that acts as a scaffold protein. Functions as an effector of the small GTPase RND2, which stimulates RhoA activity and inhibits NGF-induced neurite outgrowth. Promotes Src family kinase (SFK) signallig by regulating the subcellular localization of CSK, a negative regulator of these kinases, leading to the regulation of cell morphology and motility by a CSK-dependent mechanism. Acts as a critical coactivator of Notch signaling. The chain is Inactive tyrosine-protein kinase PRAG1 from Rattus norvegicus (Rat).